We begin with the raw amino-acid sequence, 449 residues long: MLDPALLRQHPADLAERLRSTRGFALDTAKLESLESERKHMQVRTQELQSLRNSKSKAIGQAKAKGEDVAALMAEVAGVGDELLHSHGRLTVVQHELEKIYAVIPNLPHADVPLGKSEADNVEQSRWGTPRQFDFPVKDHVELGAPNGWLDGETAVKLSGARFTVLRGPIARLHRALAQFMLDLHVGEHGYEETNVPLLVNADSMRGTGQLPKFEDDLFRIYENEYEGHTDEETGESFYTPTGGVDPDPAYYLIPTSEVPLTNIVRDEIIDAERLPLRMTAHSMCFRAEAGSGGRDTRGMIRQHQFEKVELVTACAPEDSDAEHQRMTRCAEVVLEQLGLPYRKVLLCTGDMGFSAIKTYDLEVWLPSQNTYREISSCSNCGDFQARRMQARWRNPVSGKLELLHTLNGSGTAVGRAMIAVMENYQNADGSIDVPQVLRPYMGGIERIG.

L-serine is bound at residue 256–258 (TSE). 287–289 (RAE) serves as a coordination point for ATP. An L-serine-binding site is contributed by E310. Position 374 to 377 (374 to 377 (EISS)) interacts with ATP. S410 lines the L-serine pocket.

It belongs to the class-II aminoacyl-tRNA synthetase family. Type-1 seryl-tRNA synthetase subfamily. Homodimer. The tRNA molecule binds across the dimer.

The protein resides in the cytoplasm. It catalyses the reaction tRNA(Ser) + L-serine + ATP = L-seryl-tRNA(Ser) + AMP + diphosphate + H(+). It carries out the reaction tRNA(Sec) + L-serine + ATP = L-seryl-tRNA(Sec) + AMP + diphosphate + H(+). The protein operates within aminoacyl-tRNA biosynthesis; selenocysteinyl-tRNA(Sec) biosynthesis; L-seryl-tRNA(Sec) from L-serine and tRNA(Sec): step 1/1. Functionally, catalyzes the attachment of serine to tRNA(Ser). Is also able to aminoacylate tRNA(Sec) with serine, to form the misacylated tRNA L-seryl-tRNA(Sec), which will be further converted into selenocysteinyl-tRNA(Sec). The chain is Serine--tRNA ligase from Xanthomonas oryzae pv. oryzae (strain MAFF 311018).